Consider the following 301-residue polypeptide: MNWKDVHKNFSNYKLESVGREKEIISNRVTRTGLEFADFFVHKDLKAVVLWGNDEYLYLKQFDEKLVKEKIEKIFQLTPPLVVLSRSFPAKGIILELAKKYDISILSTKESSADLTNYINTFLTEKLSKKEYLHGNLIELFGLGVLLMGKSGLGKSETSIELIKHGHMFIADDAIVCSNVFNKIIGRAPKRFFGFLEVRGLGIINASRVFGIEKVKESTQINVIIELVEFDPKVHTFERLGKDLQYKEILGVKIPYYLIPITPGKKTSDMIEVIVAQLKLMLSGYNSFKEMEEKSMEDDDE.

Catalysis depends on residues H134 and K155. ATP is bound at residue 149-156; the sequence is GKSGLGKS. S156 provides a ligand contact to Mg(2+). The active-site Proton acceptor; for phosphorylation activity. Proton donor; for dephosphorylation activity is the D173. Residues 196 to 205 are important for the catalytic mechanism of both phosphorylation and dephosphorylation; the sequence is LEVRGLGIIN. E197 contributes to the Mg(2+) binding site. The active site involves R239. An important for the catalytic mechanism of dephosphorylation region spans residues 260–265; that stretch reads PITPGK.

This sequence belongs to the HPrK/P family. In terms of assembly, homohexamer. Mg(2+) is required as a cofactor.

The catalysed reaction is [HPr protein]-L-serine + ATP = [HPr protein]-O-phospho-L-serine + ADP + H(+). It carries out the reaction [HPr protein]-O-phospho-L-serine + phosphate + H(+) = [HPr protein]-L-serine + diphosphate. Its function is as follows. Catalyzes the ATP- as well as the pyrophosphate-dependent phosphorylation of a specific serine residue in HPr, a phosphocarrier protein of the phosphoenolpyruvate-dependent sugar phosphotransferase system (PTS). HprK/P also catalyzes the pyrophosphate-producing, inorganic phosphate-dependent dephosphorylation (phosphorolysis) of seryl-phosphorylated HPr (P-Ser-HPr). The two antagonistic activities of HprK/P are regulated by several intracellular metabolites, which change their concentration in response to the absence or presence of rapidly metabolisable carbon sources (glucose, fructose, etc.) in the growth medium. Therefore, by controlling the phosphorylation state of HPr, HPrK/P is a sensor enzyme that plays a major role in the regulation of carbon metabolism and sugar transport: it mediates carbon catabolite repression (CCR), and regulates PTS-catalyzed carbohydrate uptake and inducer exclusion. The protein is HPr kinase/phosphorylase of Malacoplasma penetrans (strain HF-2) (Mycoplasma penetrans).